Reading from the N-terminus, the 1138-residue chain is Trafficking protein particle complex subunit 9 (1138 aa).

A phosphoserine mark is found at Ser-557 and Ser-944.

This sequence belongs to the NIBP family. As to quaternary structure, component of the multisubunit TRAPP (transport protein particle) complex, which includes at least TRAPPC2, TRAPPC2L, TRAPPC3, TRAPPC3L, TRAPPC4, TRAPPC5, TRAPPC8, TRAPPC9, TRAPPC10, TRAPPC11 and TRAPPC12. Directly interacts with IKBKB and MAP3K14.

It is found in the golgi apparatus. The protein localises to the cis-Golgi network. Its subcellular location is the endoplasmic reticulum. It localises to the cytoplasm. Its function is as follows. Functions as an activator of NF-kappa-B through increased phosphorylation of the IKK complex. May function in neuronal cells differentiation. May play a role in vesicular transport from endoplasmic reticulum to Golgi. This chain is Trafficking protein particle complex subunit 9 (TRAPPC9), found in Bos taurus (Bovine).